A 123-amino-acid polypeptide reads, in one-letter code: SPbeta prophage-derived uncharacterized protein YorE (123 aa).

The sequence is that of SPbeta prophage-derived uncharacterized protein YorE (yorE) from Bacillus subtilis (strain 168).